The chain runs to 407 residues: Multifunctional CCA protein (407 aa).

Positions 8 and 11 each coordinate ATP. CTP is bound by residues Gly8 and Arg11. Mg(2+)-binding residues include Asp21 and Asp23. ATP contacts are provided by Arg91, Arg137, and Arg140. Residues Arg91, Arg137, and Arg140 each contribute to the CTP site. One can recognise an HD domain in the interval 228-329 (TGVHALMALA…VALFDRVDAW (102 aa)).

It belongs to the tRNA nucleotidyltransferase/poly(A) polymerase family. Bacterial CCA-adding enzyme type 1 subfamily. As to quaternary structure, monomer. Can also form homodimers and oligomers. It depends on Mg(2+) as a cofactor. Requires Ni(2+) as cofactor.

It catalyses the reaction a tRNA precursor + 2 CTP + ATP = a tRNA with a 3' CCA end + 3 diphosphate. It carries out the reaction a tRNA with a 3' CCA end + 2 CTP + ATP = a tRNA with a 3' CCACCA end + 3 diphosphate. Catalyzes the addition and repair of the essential 3'-terminal CCA sequence in tRNAs without using a nucleic acid template. Adds these three nucleotides in the order of C, C, and A to the tRNA nucleotide-73, using CTP and ATP as substrates and producing inorganic pyrophosphate. tRNA 3'-terminal CCA addition is required both for tRNA processing and repair. Also involved in tRNA surveillance by mediating tandem CCA addition to generate a CCACCA at the 3' terminus of unstable tRNAs. While stable tRNAs receive only 3'-terminal CCA, unstable tRNAs are marked with CCACCA and rapidly degraded. This chain is Multifunctional CCA protein, found in Erwinia tasmaniensis (strain DSM 17950 / CFBP 7177 / CIP 109463 / NCPPB 4357 / Et1/99).